The sequence spans 301 residues: N-acetylmuramic acid 6-phosphate etherase (301 aa).

The region spanning 57-220 (VVERLRAGGR…STISMVRLGK (164 aa)) is the SIS domain. The Proton donor role is filled by Glu-85. Residue Glu-116 is part of the active site.

It belongs to the GCKR-like family. MurNAc-6-P etherase subfamily. Homodimer.

It catalyses the reaction N-acetyl-D-muramate 6-phosphate + H2O = N-acetyl-D-glucosamine 6-phosphate + (R)-lactate. The protein operates within amino-sugar metabolism; N-acetylmuramate degradation. Functionally, specifically catalyzes the cleavage of the D-lactyl ether substituent of MurNAc 6-phosphate, producing GlcNAc 6-phosphate and D-lactate. This chain is N-acetylmuramic acid 6-phosphate etherase, found in Rubrobacter xylanophilus (strain DSM 9941 / JCM 11954 / NBRC 16129 / PRD-1).